The chain runs to 290 residues: MLFNLTVLVMKTFKFHYKFILLFSNKFRFYLYYYMKTRSNSVLIPYTLNFKQVEAEMSLAEHLEEIRQRAFWSFSVLTTMIISCIIFVKNIVKTLQEPAAGIKFLQFAPGEYFFASIKVAAYSGILISSPFIVYQILLFVLPGMTKDERKTLLPIIIGSMILFLLGLIFGYYILVPASLNFFIKYGSDVVEPFWSFEQYFEFILVLLFGTALAFQLPVLQLVLGFLRIVSGKTMFSIWRYVILLSTVVGAVLTPSVDPLTQILLSSIILILYFGGASLVLVVEGSQKNNN.

The next 6 membrane-spanning stretches (helical) occupy residues 71-91 (FWSF…VKNI), 124-144 (GILI…LPGM), 155-175 (IIIG…YILV), 202-222 (FILV…LQLV), 234-254 (MFSI…VLTP), and 262-282 (ILLS…VLVV).

This sequence belongs to the TatC family.

The protein localises to the plastid. It is found in the chloroplast membrane. This is an uncharacterized protein from Guillardia theta (Cryptophyte).